The chain runs to 61 residues: UPF0181 protein MS1074 (61 aa).

This sequence belongs to the UPF0181 family.

This Mannheimia succiniciproducens (strain KCTC 0769BP / MBEL55E) protein is UPF0181 protein MS1074.